The following is an 894-amino-acid chain: RNA polymerase I-specific transcription initiation factor RRN6 (894 aa).

A disordered region spans residues 803–894; it reads PPFNLNSQSQ…KKKKRIRGFG (92 aa). Composition is skewed to polar residues over residues 806 to 823, 832 to 849, and 863 to 880; these read NLNS…QSSG, KTQS…QNLS, and QPPS…PRNS. Residues 881–894 are compositionally biased toward basic residues; that stretch reads QKAKKKKKRIRGFG.

In terms of assembly, component of the core factor (CF) complex, which consists of RRN6, RRN7 and RRN11. The CF heterotrimer may further dimerize to form a hexamer. RRN6 interacts with RRN7, RRN11 and RRN9.

It is found in the cytoplasm. The protein localises to the nucleus. The protein resides in the nucleolus. Acts as a component of the core factor (CF) complex which is essential for the initiation of rDNA transcription by RNA polymerase I. After binding of UAF (upstream activation factor) to an upstream element of the promoter, CF is recruited in a SPT15/TBP-dependent manner to form a preinitiation complex. This chain is RNA polymerase I-specific transcription initiation factor RRN6 (RRN6), found in Saccharomyces cerevisiae (strain ATCC 204508 / S288c) (Baker's yeast).